A 264-amino-acid chain; its full sequence is Adenosylcobinamide-GDP ribazoletransferase (264 aa).

Transmembrane regions (helical) follow at residues 39–59 (IAYA…AILI), 63–83 (ALGL…VLLT), 121–141 (ACAL…LLAL), 148–168 (LALI…LEFL), 201–221 (LLIV…LSVL), and 241–261 (VAGA…LIYA).

This sequence belongs to the CobS family. The cofactor is Mg(2+).

The protein resides in the cell inner membrane. It carries out the reaction alpha-ribazole + adenosylcob(III)inamide-GDP = adenosylcob(III)alamin + GMP + H(+). The enzyme catalyses alpha-ribazole 5'-phosphate + adenosylcob(III)inamide-GDP = adenosylcob(III)alamin 5'-phosphate + GMP + H(+). The protein operates within cofactor biosynthesis; adenosylcobalamin biosynthesis; adenosylcobalamin from cob(II)yrinate a,c-diamide: step 7/7. Functionally, joins adenosylcobinamide-GDP and alpha-ribazole to generate adenosylcobalamin (Ado-cobalamin). Also synthesizes adenosylcobalamin 5'-phosphate from adenosylcobinamide-GDP and alpha-ribazole 5'-phosphate. This Azorhizobium caulinodans (strain ATCC 43989 / DSM 5975 / JCM 20966 / LMG 6465 / NBRC 14845 / NCIMB 13405 / ORS 571) protein is Adenosylcobinamide-GDP ribazoletransferase.